The following is a 243-amino-acid chain: Probable transcriptional regulatory protein BDI_1233 (243 aa).

The protein belongs to the TACO1 family.

It localises to the cytoplasm. The protein is Probable transcriptional regulatory protein BDI_1233 of Parabacteroides distasonis (strain ATCC 8503 / DSM 20701 / CIP 104284 / JCM 5825 / NCTC 11152).